The primary structure comprises 324 residues: tRNA U34 carboxymethyltransferase (324 aa).

Carboxy-S-adenosyl-L-methionine-binding positions include Lys92, Trp106, Lys111, Gly131, 153-155 (DPT), 182-183 (IE), Met197, Tyr201, and Arg316.

This sequence belongs to the class I-like SAM-binding methyltransferase superfamily. CmoB family. As to quaternary structure, homotetramer.

The catalysed reaction is carboxy-S-adenosyl-L-methionine + 5-hydroxyuridine(34) in tRNA = 5-carboxymethoxyuridine(34) in tRNA + S-adenosyl-L-homocysteine + H(+). Its function is as follows. Catalyzes carboxymethyl transfer from carboxy-S-adenosyl-L-methionine (Cx-SAM) to 5-hydroxyuridine (ho5U) to form 5-carboxymethoxyuridine (cmo5U) at position 34 in tRNAs. This Proteus mirabilis (strain HI4320) protein is tRNA U34 carboxymethyltransferase.